The chain runs to 385 residues: Endoglucanase 1 (385 aa).

Residues 1 to 17 (MKLVFSALASLLSGASA) form the signal peptide. 2 N-linked (GlcNAc...) asparagine glycosylation sites follow: asparagine 93 and asparagine 140. The Proton donor role is filled by glutamate 176. N-linked (GlcNAc...) asparagine glycosylation is found at asparagine 200 and asparagine 237. Glutamate 284 acts as the Nucleophile in catalysis. N-linked (GlcNAc...) asparagine glycans are attached at residues asparagine 289 and asparagine 331.

This sequence belongs to the glycosyl hydrolase 5 (cellulase A) family.

It carries out the reaction Endohydrolysis of (1-&gt;4)-beta-D-glucosidic linkages in cellulose, lichenin and cereal beta-D-glucans.. It participates in glycan metabolism; cellulose degradation. Functionally, active towards carboxymethyl cellulose. This is Endoglucanase 1 (eg 1) from Robillarda sp. (strain Y-20).